The primary structure comprises 207 residues: Large ribosomal subunit protein uL4 (207 aa).

The tract at residues 56–76 (EVRGGGRKPWRQKGTGRARAG) is disordered. Basic residues predominate over residues 60-71 (GGRKPWRQKGTG).

It belongs to the universal ribosomal protein uL4 family. As to quaternary structure, part of the 50S ribosomal subunit.

One of the primary rRNA binding proteins, this protein initially binds near the 5'-end of the 23S rRNA. It is important during the early stages of 50S assembly. It makes multiple contacts with different domains of the 23S rRNA in the assembled 50S subunit and ribosome. Functionally, forms part of the polypeptide exit tunnel. The polypeptide is Large ribosomal subunit protein uL4 (Desulfitobacterium hafniense (strain DSM 10664 / DCB-2)).